A 338-amino-acid chain; its full sequence is tRNA N6-adenosine threonylcarbamoyltransferase (338 aa).

Fe cation-binding residues include H111 and H115. Substrate contacts are provided by residues 134 to 138 (LVSGG), D167, G180, and N272. D300 serves as a coordination point for Fe cation.

It belongs to the KAE1 / TsaD family. Fe(2+) serves as cofactor.

Its subcellular location is the cytoplasm. The enzyme catalyses L-threonylcarbamoyladenylate + adenosine(37) in tRNA = N(6)-L-threonylcarbamoyladenosine(37) in tRNA + AMP + H(+). Required for the formation of a threonylcarbamoyl group on adenosine at position 37 (t(6)A37) in tRNAs that read codons beginning with adenine. Is involved in the transfer of the threonylcarbamoyl moiety of threonylcarbamoyl-AMP (TC-AMP) to the N6 group of A37, together with TsaE and TsaB. TsaD likely plays a direct catalytic role in this reaction. This is tRNA N6-adenosine threonylcarbamoyltransferase from Shewanella baltica (strain OS155 / ATCC BAA-1091).